A 431-amino-acid polypeptide reads, in one-letter code: Ribosomal protein uS12 methylthiotransferase RimO (431 aa).

The MTTase N-terminal domain occupies 4–120 (HKLFLLSLGC…ILAALGAAYH (117 aa)). Cys-13, Cys-49, Cys-83, Cys-144, Cys-148, and Cys-151 together coordinate [4Fe-4S] cluster. Residues 130–359 (LTPPHYTYLK…MELQESVSQD (230 aa)) form the Radical SAM core domain. One can recognise a TRAM domain in the interval 362 to 429 (RDFEGKEITV…PFDLVGEVIG (68 aa)).

The protein belongs to the methylthiotransferase family. RimO subfamily. [4Fe-4S] cluster is required as a cofactor.

It is found in the cytoplasm. The catalysed reaction is L-aspartate(89)-[ribosomal protein uS12]-hydrogen + (sulfur carrier)-SH + AH2 + 2 S-adenosyl-L-methionine = 3-methylsulfanyl-L-aspartate(89)-[ribosomal protein uS12]-hydrogen + (sulfur carrier)-H + 5'-deoxyadenosine + L-methionine + A + S-adenosyl-L-homocysteine + 2 H(+). Its function is as follows. Catalyzes the methylthiolation of an aspartic acid residue of ribosomal protein uS12. This Pelodictyon phaeoclathratiforme (strain DSM 5477 / BU-1) protein is Ribosomal protein uS12 methylthiotransferase RimO.